Reading from the N-terminus, the 391-residue chain is MEHTWRWFGPDDPITLDEIRQTGATGIVTALHEIPNGEIWPEAAIAERKRLIEASGLAWSVVESVPVHEDIKQGRGDCETHIARYQQTLRNLAACGIDVVCYNFMPVLDWTRTDLAWPLPGGGTALRFDQTAFAAFDLYLLERPGAEADYDATERDAARAYLDGLDESARQRLIDTIIAGLPGAEEHYSLARFREVIAEYAEIDAERLRDNLGHFLRAVVPVAEEVGIRLAIHPDDPPRPLLGLPRVVSTPRDVQWILDAAPSPANGLTFCTGSYGVSAAIDLVAMGERFAERIYFAHLRATQRENDPRSFHESAHLDGDVDMVGVIKALVGEERRRERDGGPRLPLRPDHGHHLLDDLSRDTRPGYPLIGRLKGLAELRGVETAIKQLAI.

The disordered stretch occupies residues Glu-334–Leu-359.

It belongs to the mannonate dehydratase family. Fe(2+) is required as a cofactor. The cofactor is Mn(2+).

The catalysed reaction is D-mannonate = 2-dehydro-3-deoxy-D-gluconate + H2O. It functions in the pathway carbohydrate metabolism; pentose and glucuronate interconversion. Its function is as follows. Catalyzes the dehydration of D-mannonate. The chain is Mannonate dehydratase from Chromohalobacter salexigens (strain ATCC BAA-138 / DSM 3043 / CIP 106854 / NCIMB 13768 / 1H11).